A 75-amino-acid chain; its full sequence is Protein SlyX homolog (75 aa).

Belongs to the SlyX family.

The sequence is that of Protein SlyX homolog from Vibrio atlanticus (strain LGP32) (Vibrio splendidus (strain Mel32)).